We begin with the raw amino-acid sequence, 434 residues long: Mitochondrial distribution and morphology protein 12 (434 aa).

The SMP-LTD domain occupies 1–434 (MSIDIDWERA…VYPSFWTFLV (434 aa)). Positions 70–83 (YEEDDNENFSESSE) are enriched in acidic residues. Disordered regions lie at residues 70–141 (YEED…LRSP) and 181–275 (TPLG…DDLP). Over residues 86 to 97 (SPTREPVDRYGS) the composition is skewed to basic and acidic residues. The segment covering 215 to 237 (SAQSRPSTANTGNTLLSRGSMSS) has biased composition (polar residues).

Belongs to the MDM12 family. In terms of assembly, component of the ER-mitochondria encounter structure (ERMES) or MDM complex, composed of MMM1, MDM10, MDM12 and MDM34. An MMM1 homodimer associates with one molecule of MDM12 on each side in a pairwise head-to-tail manner, and the SMP-LTD domains of MMM1 and MDM12 generate a continuous hydrophobic tunnel for phospholipid trafficking.

The protein localises to the mitochondrion outer membrane. Its subcellular location is the endoplasmic reticulum membrane. Its function is as follows. Component of the ERMES/MDM complex, which serves as a molecular tether to connect the endoplasmic reticulum (ER) and mitochondria. Components of this complex are involved in the control of mitochondrial shape and protein biogenesis, and function in nonvesicular lipid trafficking between the ER and mitochondria. MDM12 is required for the interaction of the ER-resident membrane protein MMM1 and the outer mitochondrial membrane-resident beta-barrel protein MDM10. The MDM12-MMM1 subcomplex functions in the major beta-barrel assembly pathway that is responsible for biogenesis of all mitochondrial outer membrane beta-barrel proteins, and acts in a late step after the SAM complex. The MDM10-MDM12-MMM1 subcomplex further acts in the TOM40-specific pathway after the action of the MDM12-MMM1 complex. Essential for establishing and maintaining the structure of mitochondria and maintenance of mtDNA nucleoids. This Blastomyces gilchristii (strain SLH14081) (Blastomyces dermatitidis) protein is Mitochondrial distribution and morphology protein 12.